The primary structure comprises 1383 residues: DNA-directed RNA polymerase subunit beta'' (1383 aa).

The Zn(2+) site is built by cysteine 220, cysteine 289, cysteine 296, and cysteine 299.

It belongs to the RNA polymerase beta' chain family. RpoC2 subfamily. In terms of assembly, in plastids the minimal PEP RNA polymerase catalytic core is composed of four subunits: alpha, beta, beta', and beta''. When a (nuclear-encoded) sigma factor is associated with the core the holoenzyme is formed, which can initiate transcription. It depends on Zn(2+) as a cofactor.

It localises to the plastid. The protein resides in the chloroplast. It carries out the reaction RNA(n) + a ribonucleoside 5'-triphosphate = RNA(n+1) + diphosphate. Functionally, DNA-dependent RNA polymerase catalyzes the transcription of DNA into RNA using the four ribonucleoside triphosphates as substrates. The polypeptide is DNA-directed RNA polymerase subunit beta'' (Oenothera elata subsp. hookeri (Hooker's evening primrose)).